Consider the following 133-residue polypeptide: MSWQTYVDEHLMCDIDGQGQQLAASAIVGHDGSVWAQSSSFPQFKPQEITGIMKDFEEPGHLAPTGLHLGGIKYMVIQGEAGAVIRGKKGSGGITIKKTGQALVFGIYEEPVTPGQCNMVVERLGDYLIDQGL.

Cys13 and Cys117 are disulfide-bonded. Positions 83 to 99 (AVIRGKKGSGGITIKKT) match the Involved in PIP2 interaction motif. Thr113 carries the post-translational modification Phosphothreonine.

This sequence belongs to the profilin family. Occurs in many kinds of cells as a complex with monomeric actin in a 1:1 ratio. Phosphorylated by MAP kinases.

The protein resides in the cytoplasm. The protein localises to the cytoskeleton. Binds to actin and affects the structure of the cytoskeleton. At high concentrations, profilin prevents the polymerization of actin, whereas it enhances it at low concentrations. This is Profilin-2 from Betula pendula (European white birch).